Consider the following 473-residue polypeptide: Sarcalumenin (473 aa).

A signal peptide spans 1–20; that stretch reads MRALVLLGCLLASLLFSGQA. A Dynamin-type G domain is found at 90 to 331; sequence ITSKPMVLFL…IENRLENKIA (242 aa). The segment at 100 to 107 is G1 motif; that stretch reads GPWSVGKS. The G2 motif stretch occupies residues 128 to 129; it reads EP. Residues 190 to 193 form a G3 motif region; the sequence is DTPG. Residues 255-258 are G4 motif; the sequence is NKAD. Pro278 is a region of interest (G5 motif). 2 N-linked (GlcNAc...) asparagine glycosylation sites follow: Asn281 and Asn389.

This sequence belongs to the TRAFAC class dynamin-like GTPase superfamily. Dynamin/Fzo/YdjA family. In terms of processing, N-glycosylated.

The protein resides in the sarcoplasmic reticulum lumen. It is found in the sarcoplasmic reticulum membrane. The polypeptide is Sarcalumenin (SRL) (Homo sapiens (Human)).